We begin with the raw amino-acid sequence, 72 residues long: Probable protein E5B (72 aa).

This Homo sapiens (Human) protein is Probable protein E5B.